We begin with the raw amino-acid sequence, 911 residues long: Inositol 1,4,5-triphosphate receptor associated 1 (911 aa).

A compositionally biased stretch (basic and acidic residues) spans 1–11 (MVKAPQSEERL). 4 disordered regions span residues 1–21 (MVKA…NNSV), 39–122 (EVPG…HRHL), 174–405 (LTRR…GPRL), and 478–498 (EQEK…ESKG). The span at 68–86 (AAQSPAGQDPATTGISCSP) shows a compositional bias: polar residues. Residues 111–122 (HSPHRRLSHRHL) are compositionally biased toward basic residues. At S118 the chain carries Phosphoserine. The segment at 152–184 (SEEDKKKNLALLEEAKLVSERFLTRRGRKSRSS) is interaction with PRKG1. Polar residues predominate over residues 183–212 (SSPGESSPAVSPNLSPGASPASSQSNSLTV). The span at 277–292 (TVEKSKEITIEQKENF) shows a compositional bias: basic and acidic residues. The residue at position 393 (S393) is a Phosphoserine. The interaction with ITPR1 stretch occupies residues 534-580 (NVFVQLSLAFRNDSYTLESRINQAERERNLTEENTEKELENFKASIT). Residues 547-645 (SYTLESRINQ…MQYVENLKRT (99 aa)) are a coiled coil. S683 and S696 each carry phosphoserine. Disordered regions lie at residues 706–766 (LNLP…TPSC) and 787–829 (YQEG…KEQR). The segment covering 708 to 728 (LPGQSPSSSPIPSLPALSESS) has biased composition (low complexity). Positions 790 to 801 (GLKKTKELQGLR) are enriched in basic and acidic residues. A compositionally biased stretch (acidic residues) spans 802–825 (EEEEEQKSESPEEPEEVAETEEEE). The helical transmembrane segment at 853–873 (VIWMMAAAMLVLTVVLGLYGS) threads the bilayer.

In terms of assembly, interacts with PRKG1/cGKI-beta and ITPR1/IP3R type I. Part of cGMP kinase signaling complex at least composed of ACTA2/alpha-actin, CNN1/calponin H1, PLN/phospholamban, PRKG1 and ITPR1. Interacts with HCN4; regulates HCN4 channel activity. In terms of processing, phosphorylated by PRKG1/cGKI-beta. Phosphorylation at Ser-696 is necessary for PRKG1-induced calcium release in the cytosol. In terms of tissue distribution, highly expressed in trachea, aorta and uterus.

Its subcellular location is the sarcoplasmic reticulum. The protein resides in the cytoplasm. It localises to the perinuclear region. It is found in the membrane. Its function is as follows. Plays a role as NO/PRKG1-dependent regulator of IP3-induced calcium release; its phosphorylation by PRKG1 inhibits bradykinin and IP3-induced calcium release from intracellular stores. Recruits PRKG1 to the endoplasmic reticulum and may mediate the assembly of PRKG1 and ITPR1 in a macrocomplex. Involved in PRKG1 signaling cascade leading to inhibition of platelet activation and aggregation. Also mediates NO-dependent inhibition of calcium signaling in gastrointestinal smooth muscle contributing to NO-dependent relaxation. Plays a role in the regulation of cellular excitability by regulating the hyperpolarization-activated cyclic nucleotide-gated HCN4 channel activity. The polypeptide is Inositol 1,4,5-triphosphate receptor associated 1 (IRAG1) (Bos taurus (Bovine)).